The sequence spans 273 residues: MSILEKITSSPSECAEHLTNKDSCLSKKIQKELTSFLEKKETLGCDSESCVITHPAVKAYAQQKGLDLSKELETRFKAPGPRNNTGLLTNFNIDETLQRWAIKYTKFFNCPFSMMDFERVHYKFNQVDMVKVYKGEELQYVEGKVVKRPCNTFGCVLNTDFSTGTGKHWVAIFVDMRGDCWSIEYFNSAGNSPPGPVIRWMERVKQQLLKIHHTVKTLAVTNIRHQRSQTECGPYSLFYIRARLDNVSYAHFISARITDEDMYKFRTHLFRIA.

Residues His168 and Asn187 contribute to the active site. Gln226 serves as a coordination point for substrate. Cys232 functions as the Nucleophile in the catalytic mechanism.

The protein belongs to the peptidase C63 family.

The protein resides in the host cytoplasm. Its subcellular location is the virion. Functionally, cysteine protease that plays several role during infection including processing of the structural polyprotein or inhibition of the host immune response. Catalyzes the maturation of the pp220 and pp62 polyprotein precursors into core-shell proteins. Plays a role in the disruption of host pyroptosis via specific cleavage of gasdermin D/GSDMD. In addition, strongly decreases the host cGAS-STING signaling by targeting IKBKE via its enzymatic activity. Also impairs host FOXJ1-mediated antiviral effect via degradation of FOXJ1. Cleaves host G3BP1 inducing loss of stress granules formation. Interacts with and induces the degradation of host STAT2 via polyubiquitination of the latter. The sequence is that of Cysteine protease S273R from Ornithodoros (relapsing fever ticks).